The sequence spans 295 residues: 3-hydroxy-5-phosphonooxypentane-2,4-dione thiolase (295 aa).

K203 serves as the catalytic Schiff-base intermediate with substrate.

Belongs to the DeoC/FbaB aldolase family. As to quaternary structure, homodecamer.

It is found in the cytoplasm. The enzyme catalyses dihydroxyacetone phosphate + acetyl-CoA = 3-hydroxy-2,4-dioxopentyl phosphate + CoA. Its function is as follows. Involved in the degradation of phospho-AI-2, thereby terminating induction of the lsr operon and closing the AI-2 signaling cycle. Catalyzes the transfer of an acetyl moiety from 3-hydroxy-5-phosphonooxypentane-2,4-dione to CoA to form glycerone phosphate and acetyl-CoA. The polypeptide is 3-hydroxy-5-phosphonooxypentane-2,4-dione thiolase (Enterobacter sp. (strain 638)).